Reading from the N-terminus, the 341-residue chain is S-adenosylmethionine:tRNA ribosyltransferase-isomerase (341 aa).

It belongs to the QueA family. In terms of assembly, monomer.

Its subcellular location is the cytoplasm. It carries out the reaction 7-aminomethyl-7-carbaguanosine(34) in tRNA + S-adenosyl-L-methionine = epoxyqueuosine(34) in tRNA + adenine + L-methionine + 2 H(+). Its pathway is tRNA modification; tRNA-queuosine biosynthesis. Functionally, transfers and isomerizes the ribose moiety from AdoMet to the 7-aminomethyl group of 7-deazaguanine (preQ1-tRNA) to give epoxyqueuosine (oQ-tRNA). In Herminiimonas arsenicoxydans, this protein is S-adenosylmethionine:tRNA ribosyltransferase-isomerase.